We begin with the raw amino-acid sequence, 238 residues long: 3-dehydroquinate dehydratase (238 aa).

Residues 35–37 (ELR) and Arg70 each bind 3-dehydroquinate. Catalysis depends on His133, which acts as the Proton donor/acceptor. The active-site Schiff-base intermediate with substrate is the Lys160. 3-dehydroquinate-binding residues include Arg202 and Gln225.

It belongs to the type-I 3-dehydroquinase family. Homodimer.

It catalyses the reaction 3-dehydroquinate = 3-dehydroshikimate + H2O. It participates in metabolic intermediate biosynthesis; chorismate biosynthesis; chorismate from D-erythrose 4-phosphate and phosphoenolpyruvate: step 3/7. Its function is as follows. Involved in the third step of the chorismate pathway, which leads to the biosynthesis of aromatic amino acids. Catalyzes the cis-dehydration of 3-dehydroquinate (DHQ) and introduces the first double bond of the aromatic ring to yield 3-dehydroshikimate. This chain is 3-dehydroquinate dehydratase, found in Staphylococcus aureus (strain MSSA476).